The chain runs to 119 residues: Large ribosomal subunit protein bL20 (119 aa).

It belongs to the bacterial ribosomal protein bL20 family.

Functionally, binds directly to 23S ribosomal RNA and is necessary for the in vitro assembly process of the 50S ribosomal subunit. It is not involved in the protein synthesizing functions of that subunit. The polypeptide is Large ribosomal subunit protein bL20 (Rhodopseudomonas palustris (strain ATCC BAA-98 / CGA009)).